A 327-amino-acid chain; its full sequence is Glutaminase (327 aa).

Residues S92, N143, N195, Y218, Y263, and V281 each contribute to the substrate site.

It belongs to the glutaminase family. Homotetramer.

The enzyme catalyses L-glutamine + H2O = L-glutamate + NH4(+). The protein is Glutaminase of Synechocystis sp. (strain ATCC 27184 / PCC 6803 / Kazusa).